A 193-amino-acid chain; its full sequence is Cysteine and glycine-rich protein 2 (193 aa).

Residues 10–61 (CGACGRTVYHAEEVQCDGRTFHRCCFLCMVCRKNLDSTTVAIHDEEIYCKSC) form the LIM zinc-binding 1 domain. The Nuclear localization signal motif lies at 64–69 (KKYGPK). Lys-91 is covalently cross-linked (Glycyl lysine isopeptide (Lys-Gly) (interchain with G-Cter in SUMO2)). N6-acetyllysine is present on residues Lys-112 and Lys-131. Residues 119 to 170 (CSRCGDSVYAAEKIIGAGKPWHKNCFRCAKCGKSLESTTLTEKEGEIYCKGC) form the LIM zinc-binding 2 domain. Lys-137 is modified (N6-acetyllysine; alternate). An N6-succinyllysine; alternate modification is found at Lys-137. An N6-acetyllysine modification is found at Lys-161.

As to quaternary structure, interacts with KAT14. The LIM domain 1 is necessary and sufficient for this interaction. Interacts with GLRX3. In terms of tissue distribution, highly expressed in the aorta; weakly found in the kidney, thymus, and intestine. Barely detectable in brain, testis, esophagus, lung, liver, aortic adventitia, vena cava, or uterus; not present in heart and skeletal muscle.

It localises to the nucleus. Functionally, drastically down-regulated in response to PDGF-BB or cell injury, that promote smooth muscle cell proliferation and dedifferentiation. Seems to play a role in the development of the embryonic vascular system. The polypeptide is Cysteine and glycine-rich protein 2 (Csrp2) (Rattus norvegicus (Rat)).